Reading from the N-terminus, the 132-residue chain is Small ribosomal subunit protein uS11 (132 aa).

This sequence belongs to the universal ribosomal protein uS11 family. Part of the 30S ribosomal subunit.

In terms of biological role, located on the platform of the 30S subunit. This chain is Small ribosomal subunit protein uS11, found in Sulfurisphaera tokodaii (strain DSM 16993 / JCM 10545 / NBRC 100140 / 7) (Sulfolobus tokodaii).